Here is a 124-residue protein sequence, read N- to C-terminus: UPF0231 protein Sama_0645 (124 aa).

It belongs to the UPF0231 family.

In Shewanella amazonensis (strain ATCC BAA-1098 / SB2B), this protein is UPF0231 protein Sama_0645.